Here is a 430-residue protein sequence, read N- to C-terminus: Histidine--tRNA ligase (430 aa).

It belongs to the class-II aminoacyl-tRNA synthetase family. As to quaternary structure, homodimer.

The protein resides in the cytoplasm. It catalyses the reaction tRNA(His) + L-histidine + ATP = L-histidyl-tRNA(His) + AMP + diphosphate + H(+). The sequence is that of Histidine--tRNA ligase from Acinetobacter baumannii (strain SDF).